The chain runs to 570 residues: Proline--tRNA ligase (570 aa).

This sequence belongs to the class-II aminoacyl-tRNA synthetase family. ProS type 1 subfamily. In terms of assembly, homodimer.

It localises to the cytoplasm. It catalyses the reaction tRNA(Pro) + L-proline + ATP = L-prolyl-tRNA(Pro) + AMP + diphosphate. Its function is as follows. Catalyzes the attachment of proline to tRNA(Pro) in a two-step reaction: proline is first activated by ATP to form Pro-AMP and then transferred to the acceptor end of tRNA(Pro). As ProRS can inadvertently accommodate and process non-cognate amino acids such as alanine and cysteine, to avoid such errors it has two additional distinct editing activities against alanine. One activity is designated as 'pretransfer' editing and involves the tRNA(Pro)-independent hydrolysis of activated Ala-AMP. The other activity is designated 'posttransfer' editing and involves deacylation of mischarged Ala-tRNA(Pro). The misacylated Cys-tRNA(Pro) is not edited by ProRS. The polypeptide is Proline--tRNA ligase (Clostridium beijerinckii (strain ATCC 51743 / NCIMB 8052) (Clostridium acetobutylicum)).